Consider the following 273-residue polypeptide: Tryptophan synthase alpha chain (273 aa).

Active-site proton acceptor residues include Glu-56 and Asp-67.

It belongs to the TrpA family. In terms of assembly, tetramer of two alpha and two beta chains.

The enzyme catalyses (1S,2R)-1-C-(indol-3-yl)glycerol 3-phosphate + L-serine = D-glyceraldehyde 3-phosphate + L-tryptophan + H2O. Its pathway is amino-acid biosynthesis; L-tryptophan biosynthesis; L-tryptophan from chorismate: step 5/5. Its function is as follows. The alpha subunit is responsible for the aldol cleavage of indoleglycerol phosphate to indole and glyceraldehyde 3-phosphate. This Shewanella baltica (strain OS185) protein is Tryptophan synthase alpha chain.